A 763-amino-acid polypeptide reads, in one-letter code: Thyrotropin receptor (763 aa).

Residues 1–21 form the signal peptide; it reads MRPTPLLRLALFLVLPSSLGG. At 22–412 the chain is on the extracellular side; that stretch reads ERCPSPPCEC…EFNPCEDIMG (391 aa). Cys31 and Cys41 are joined by a disulfide. The stretch at 51–74 is one LRR 1 repeat; that stretch reads PPSTQTLKFIETHLKTIPSRAFSN. N-linked (GlcNAc...) asparagine glycans are attached at residues Asn77 and Asn99. LRR repeat units lie at residues 125–150, 151–174, 176–199, 201–223, and 225–248; these read LPLL…IYST, DVFF…AFQG, CNET…AFNG, KLDA…AFAG, and YSGP…GLEH. N-linked (GlcNAc...) asparagine glycosylation is found at Asn177 and Asn198. An N-linked (GlcNAc...) asparagine glycan is attached at Asn302. The residue at position 384 (Tyr384) is a Sulfotyrosine. The helical transmembrane segment at 413–440 threads the bilayer; sequence YKFLRIVVWFVSLLALLGNVFVLVILLT. Residues 441-449 lie on the Cytoplasmic side of the membrane; sequence SHYKLTVPR. The helical transmembrane segment at 450-472 threads the bilayer; sequence FLMCNLAFADFCMGLYLLLIASV. The Extracellular segment spans residues 473-493; that stretch reads DLYTQSEYYNHAIDWQTGPGC. The cysteines at positions 493 and 568 are disulfide-linked. Residues 494-516 form a helical membrane-spanning segment; the sequence is NTAGFFTVFASELSVYTLTVITL. Residues 517–536 lie on the Cytoplasmic side of the membrane; that stretch reads ERWHAITFAMRLDRKIRLWH. A helical membrane pass occupies residues 537–559; it reads AYVIMLGGWVCCFLLALLPLVGI. The Extracellular portion of the chain corresponds to 560–579; sequence SSYAKVSICLPMDTETPLAL. A helical membrane pass occupies residues 580–601; it reads AYIILVLLLNIIAFIIVCACYV. The Cytoplasmic segment spans residues 602–624; sequence KIYITVRNPHYNPGDKDTRIAKR. The chain crosses the membrane as a helical span at residues 625–648; sequence MAVLIFTDFMCMAPISFYALSALM. The Extracellular segment spans residues 649–659; sequence NKPLITVTNSK. A helical membrane pass occupies residues 660–681; that stretch reads ILLVLFYPLNSCANPFLYAIFT. At 682-763 the chain is on the cytoplasmic side; sequence KAFQRDVFML…TSKEYKRTVL (82 aa). The segment at 742-763 is disordered; sequence ENSHLTPKQQDQTSKEYKRTVL. The segment covering 744-753 has biased composition (polar residues); the sequence is SHLTPKQQDQ. Residues 754-763 show a composition bias toward basic and acidic residues; sequence TSKEYKRTVL. A PDZ-binding motif is present at residues 761–763; the sequence is TVL.

The protein belongs to the G-protein coupled receptor 1 family. FSH/LSH/TSH subfamily. In terms of assembly, interacts with heterodimer GPHA2:GPHB5; this interaction stimulates cAMP production. Interacts (via the PDZ-binding motif) with SCRIB; regulates TSHR trafficking and function. Glycosylated. In terms of processing, sulfated. Sulfation on Tyr-384 plays a role in thyrotropin receptor binding and activation.

The protein resides in the cell membrane. Its subcellular location is the basolateral cell membrane. In terms of biological role, receptor for the thyroid-stimulating hormone (TSH) or thyrotropin. Also acts as a receptor for the heterodimeric glycoprotein hormone (GPHA2:GPHB5) or thyrostimulin. The activity of this receptor is mediated by G proteins which activate adenylate cyclase. Plays a central role in controlling thyroid cell metabolism. This chain is Thyrotropin receptor (TSHR), found in Bos taurus (Bovine).